The sequence spans 261 residues: Small ribosomal subunit protein eS4B (261 aa).

A Phosphoserine modification is found at serine 32. The 64-residue stretch at 42–105 folds into the S4 RNA-binding domain; the sequence is LPLIVFLRNR…NENFRLVYDV (64 aa). Residue lysine 62 forms a Glycyl lysine isopeptide (Lys-Gly) (interchain with G-Cter in ubiquitin) linkage. Threonine 115 is subject to Phosphothreonine. Residues lysine 134, lysine 161, lysine 168, lysine 174, lysine 179, lysine 211, and lysine 233 each participate in a glycyl lysine isopeptide (Lys-Gly) (interchain with G-Cter in ubiquitin) cross-link. The residue at position 247 (serine 247) is a Phosphoserine.

Belongs to the eukaryotic ribosomal protein eS4 family. As to quaternary structure, component of the small ribosomal subunit (SSU). Mature yeast ribosomes consist of a small (40S) and a large (60S) subunit. The 40S small subunit contains 1 molecule of ribosomal RNA (18S rRNA) and 33 different proteins (encoded by 57 genes). The large 60S subunit contains 3 rRNA molecules (25S, 5.8S and 5S rRNA) and 46 different proteins (encoded by 81 genes).

Its subcellular location is the cytoplasm. Its function is as follows. Component of the ribosome, a large ribonucleoprotein complex responsible for the synthesis of proteins in the cell. The small ribosomal subunit (SSU) binds messenger RNAs (mRNAs) and translates the encoded message by selecting cognate aminoacyl-transfer RNA (tRNA) molecules. The large subunit (LSU) contains the ribosomal catalytic site termed the peptidyl transferase center (PTC), which catalyzes the formation of peptide bonds, thereby polymerizing the amino acids delivered by tRNAs into a polypeptide chain. The nascent polypeptides leave the ribosome through a tunnel in the LSU and interact with protein factors that function in enzymatic processing, targeting, and the membrane insertion of nascent chains at the exit of the ribosomal tunnel. This is Small ribosomal subunit protein eS4B from Saccharomyces cerevisiae (strain ATCC 204508 / S288c) (Baker's yeast).